We begin with the raw amino-acid sequence, 392 residues long: Formate-dependent phosphoribosylglycinamide formyltransferase (392 aa).

N(1)-(5-phospho-beta-D-ribosyl)glycinamide-binding positions include 22–23 (EL) and E82. ATP is bound by residues R114, K155, 160 to 165 (SSGKGQ), 195 to 198 (EGVV), and E203. The ATP-grasp domain maps to 119-308 (RLAAEELQLP…EFALHVRAFL (190 aa)). The Mg(2+) site is built by E267 and E279. N(1)-(5-phospho-beta-D-ribosyl)glycinamide is bound by residues D286, K355, and 362–363 (RR).

Belongs to the PurK/PurT family. As to quaternary structure, homodimer.

It carries out the reaction N(1)-(5-phospho-beta-D-ribosyl)glycinamide + formate + ATP = N(2)-formyl-N(1)-(5-phospho-beta-D-ribosyl)glycinamide + ADP + phosphate + H(+). Its pathway is purine metabolism; IMP biosynthesis via de novo pathway; N(2)-formyl-N(1)-(5-phospho-D-ribosyl)glycinamide from N(1)-(5-phospho-D-ribosyl)glycinamide (formate route): step 1/1. Its function is as follows. Involved in the de novo purine biosynthesis. Catalyzes the transfer of formate to 5-phospho-ribosyl-glycinamide (GAR), producing 5-phospho-ribosyl-N-formylglycinamide (FGAR). Formate is provided by PurU via hydrolysis of 10-formyl-tetrahydrofolate. This is Formate-dependent phosphoribosylglycinamide formyltransferase from Shigella boydii serotype 18 (strain CDC 3083-94 / BS512).